Reading from the N-terminus, the 238-residue chain is Pyridoxine 5'-phosphate synthase (238 aa).

3-amino-2-oxopropyl phosphate-binding residues include Asn-7 and Arg-18. The Proton acceptor role is filled by His-43. 1-deoxy-D-xylulose 5-phosphate contacts are provided by Arg-45 and His-50. Glu-70 functions as the Proton acceptor in the catalytic mechanism. Thr-100 provides a ligand contact to 1-deoxy-D-xylulose 5-phosphate. Catalysis depends on His-190, which acts as the Proton donor. Residues Asp-191 and 213–214 each bind 3-amino-2-oxopropyl phosphate; that span reads GH.

It belongs to the PNP synthase family. As to quaternary structure, homooctamer; tetramer of dimers.

It localises to the cytoplasm. The catalysed reaction is 3-amino-2-oxopropyl phosphate + 1-deoxy-D-xylulose 5-phosphate = pyridoxine 5'-phosphate + phosphate + 2 H2O + H(+). The protein operates within cofactor biosynthesis; pyridoxine 5'-phosphate biosynthesis; pyridoxine 5'-phosphate from D-erythrose 4-phosphate: step 5/5. Its function is as follows. Catalyzes the complicated ring closure reaction between the two acyclic compounds 1-deoxy-D-xylulose-5-phosphate (DXP) and 3-amino-2-oxopropyl phosphate (1-amino-acetone-3-phosphate or AAP) to form pyridoxine 5'-phosphate (PNP) and inorganic phosphate. The protein is Pyridoxine 5'-phosphate synthase of Porphyromonas gingivalis (strain ATCC 33277 / DSM 20709 / CIP 103683 / JCM 12257 / NCTC 11834 / 2561).